The following is a 431-amino-acid chain: 5'-deoxyadenosine deaminase (431 aa).

Positions 65 and 67 each coordinate Zn(2+). Glu94 and His185 together coordinate substrate. His212 contributes to the Zn(2+) binding site. Substrate is bound by residues Glu215 and Asp300. Residue Asp300 coordinates Zn(2+).

The protein belongs to the metallo-dependent hydrolases superfamily. MTA/SAH deaminase family. As to quaternary structure, homotetramer. Zn(2+) is required as a cofactor.

The catalysed reaction is 5'-deoxyadenosine + H2O + H(+) = 5'-deoxyinosine + NH4(+). It catalyses the reaction S-adenosyl-L-homocysteine + H2O + H(+) = S-inosyl-L-homocysteine + NH4(+). It carries out the reaction S-methyl-5'-thioadenosine + H2O + H(+) = S-methyl-5'-thioinosine + NH4(+). The enzyme catalyses adenosine + H2O + H(+) = inosine + NH4(+). It functions in the pathway amino-acid biosynthesis; S-adenosyl-L-methionine biosynthesis. Catalyzes the deamination of three SAM-derived enzymatic products, namely 5'-deoxyadenosine, S-adenosyl-L-homocysteine, and 5'-methylthioadenosine, to produce the inosine analogs. Can also deaminate adenosine. The preferred substrate for this enzyme is 5'-deoxyadenosine, but all these substrates are efficiently deaminated. Likely functions in a S-adenosyl-L-methionine (SAM) recycling pathway from S-adenosyl-L-homocysteine (SAH) produced from SAM-dependent methylation reactions. May also be involved in the recycling of 5'-deoxyadenosine, whereupon the 5'-deoxyribose moiety of 5'-deoxyinosine is further metabolized to deoxyhexoses used for the biosynthesis of aromatic amino acids in methanogens. This Methanopyrus kandleri (strain AV19 / DSM 6324 / JCM 9639 / NBRC 100938) protein is 5'-deoxyadenosine deaminase.